The following is a 283-amino-acid chain: Nucleotide-binding protein Sama_3091 (283 aa).

8–15 (GRSGSGKS) contacts ATP. A GTP-binding site is contributed by 56-59 (DIRN).

The protein belongs to the RapZ-like family.

Its function is as follows. Displays ATPase and GTPase activities. This Shewanella amazonensis (strain ATCC BAA-1098 / SB2B) protein is Nucleotide-binding protein Sama_3091.